A 159-amino-acid chain; its full sequence is 2-C-methyl-D-erythritol 2,4-cyclodiphosphate synthase (159 aa).

A divalent metal cation contacts are provided by D10 and H12. Residues 10–12 (DVH) and 36–37 (HS) each bind 4-CDP-2-C-methyl-D-erythritol 2-phosphate. H44 contributes to the a divalent metal cation binding site. Residues 58 to 60 (DIG) and R144 each bind 4-CDP-2-C-methyl-D-erythritol 2-phosphate.

It belongs to the IspF family. Homotrimer. A divalent metal cation serves as cofactor.

It catalyses the reaction 4-CDP-2-C-methyl-D-erythritol 2-phosphate = 2-C-methyl-D-erythritol 2,4-cyclic diphosphate + CMP. Its pathway is isoprenoid biosynthesis; isopentenyl diphosphate biosynthesis via DXP pathway; isopentenyl diphosphate from 1-deoxy-D-xylulose 5-phosphate: step 4/6. Functionally, involved in the biosynthesis of isopentenyl diphosphate (IPP) and dimethylallyl diphosphate (DMAPP), two major building blocks of isoprenoid compounds. Catalyzes the conversion of 4-diphosphocytidyl-2-C-methyl-D-erythritol 2-phosphate (CDP-ME2P) to 2-C-methyl-D-erythritol 2,4-cyclodiphosphate (ME-CPP) with a corresponding release of cytidine 5-monophosphate (CMP). The protein is 2-C-methyl-D-erythritol 2,4-cyclodiphosphate synthase of Paraburkholderia phymatum (strain DSM 17167 / CIP 108236 / LMG 21445 / STM815) (Burkholderia phymatum).